The following is a 343-amino-acid chain: ELAV-like protein 3 (343 aa).

3 consecutive RRM domains span residues 35 to 113 (TNLI…YARP), 121 to 202 (ANLY…FANN), and 260 to 338 (WCIF…FKTS).

Belongs to the RRM elav family.

RNA-binding protein that binds to AU-rich sequences (AREs) of target mRNAs. May also bind poly-A tracts via RRM 3. May be involved in neuronal differentiation and maintenance. The polypeptide is ELAV-like protein 3 (Xenopus tropicalis (Western clawed frog)).